Reading from the N-terminus, the 419-residue chain is Acyl-[acyl-carrier-protein] desaturase 6, chloroplastic (419 aa).

The N-terminal 54 residues, 1–54 (MAATATMAMPLANRLRCKPNTNSSSPSRTLFGRRVTMISSSRWGSAVSGSAIMS), are a transit peptide targeting the chloroplast. Fe cation-binding residues include glutamate 151, glutamate 189, histidine 192, glutamate 242, glutamate 277, and histidine 280.

The protein belongs to the fatty acid desaturase type 2 family. Homodimer. It depends on Fe(2+) as a cofactor.

It is found in the plastid. The protein localises to the chloroplast. Its pathway is lipid metabolism; fatty acid metabolism. Functionally, introduces a cis double bond in the acyl chain of an acyl-[acyl-carrier protein]. This chain is Acyl-[acyl-carrier-protein] desaturase 6, chloroplastic, found in Oryza sativa subsp. japonica (Rice).